The following is a 302-amino-acid chain: tRNA dimethylallyltransferase (302 aa).

ATP is bound at residue 9–16; it reads GATATGKS. Residue 11–16 coordinates substrate; that stretch reads TATGKS. The interval 34–37 is interaction with substrate tRNA; that stretch reads DSRQ.

Belongs to the IPP transferase family. In terms of assembly, monomer. Mg(2+) serves as cofactor.

It catalyses the reaction adenosine(37) in tRNA + dimethylallyl diphosphate = N(6)-dimethylallyladenosine(37) in tRNA + diphosphate. In terms of biological role, catalyzes the transfer of a dimethylallyl group onto the adenine at position 37 in tRNAs that read codons beginning with uridine, leading to the formation of N6-(dimethylallyl)adenosine (i(6)A). The sequence is that of tRNA dimethylallyltransferase from Nostoc punctiforme (strain ATCC 29133 / PCC 73102).